The chain runs to 454 residues: Bifunctional protein GlmU (454 aa).

Residues 1–226 (MSLDIVILAA…AMEVQGANDR (226 aa)) form a pyrophosphorylase region. UDP-N-acetyl-alpha-D-glucosamine contacts are provided by residues 8-11 (LAAG), lysine 22, glutamine 73, 78-79 (GT), 99-101 (YGD), glycine 136, glutamate 151, asparagine 166, and asparagine 224. Aspartate 101 provides a ligand contact to Mg(2+). Residue asparagine 224 participates in Mg(2+) binding. Residues 227–247 (LQLAQLERHYQSRVARRLMAQ) are linker. The N-acetyltransferase stretch occupies residues 248 to 454 (GVTLRDPARF…GWQRPTKQKK (207 aa)). UDP-N-acetyl-alpha-D-glucosamine-binding residues include arginine 330 and lysine 348. The active-site Proton acceptor is histidine 360. Positions 363 and 374 each coordinate UDP-N-acetyl-alpha-D-glucosamine. Acetyl-CoA contacts are provided by residues alanine 377, 383 to 384 (NY), serine 402, alanine 420, and arginine 437.

It in the N-terminal section; belongs to the N-acetylglucosamine-1-phosphate uridyltransferase family. This sequence in the C-terminal section; belongs to the transferase hexapeptide repeat family. In terms of assembly, homotrimer. It depends on Mg(2+) as a cofactor.

The protein localises to the cytoplasm. The enzyme catalyses alpha-D-glucosamine 1-phosphate + acetyl-CoA = N-acetyl-alpha-D-glucosamine 1-phosphate + CoA + H(+). The catalysed reaction is N-acetyl-alpha-D-glucosamine 1-phosphate + UTP + H(+) = UDP-N-acetyl-alpha-D-glucosamine + diphosphate. The protein operates within nucleotide-sugar biosynthesis; UDP-N-acetyl-alpha-D-glucosamine biosynthesis; N-acetyl-alpha-D-glucosamine 1-phosphate from alpha-D-glucosamine 6-phosphate (route II): step 2/2. Its pathway is nucleotide-sugar biosynthesis; UDP-N-acetyl-alpha-D-glucosamine biosynthesis; UDP-N-acetyl-alpha-D-glucosamine from N-acetyl-alpha-D-glucosamine 1-phosphate: step 1/1. It functions in the pathway bacterial outer membrane biogenesis; LPS lipid A biosynthesis. In terms of biological role, catalyzes the last two sequential reactions in the de novo biosynthetic pathway for UDP-N-acetylglucosamine (UDP-GlcNAc). The C-terminal domain catalyzes the transfer of acetyl group from acetyl coenzyme A to glucosamine-1-phosphate (GlcN-1-P) to produce N-acetylglucosamine-1-phosphate (GlcNAc-1-P), which is converted into UDP-GlcNAc by the transfer of uridine 5-monophosphate (from uridine 5-triphosphate), a reaction catalyzed by the N-terminal domain. This is Bifunctional protein GlmU from Azotobacter vinelandii (strain DJ / ATCC BAA-1303).